Reading from the N-terminus, the 539-residue chain is Diacylglycerol O-acyltransferase 1 (539 aa).

The interval M1–G104 is disordered. The segment covering T33–N52 has biased composition (polar residues). Basic and acidic residues predominate over residues E56 to R80. A run of 7 helical transmembrane segments spans residues H143–I163, W187–E207, V219–I239, S244–V264, Y294–Y314, V334–I354, and V383–L403. The FYXDWWN motif motif lies at F410–N416. A run of 3 helical transmembrane segments spans residues G451–V471, C473–I493, and V506–L526. The active site involves H465.

It belongs to the membrane-bound acyltransferase family. Sterol o-acyltransferase subfamily.

The protein resides in the endoplasmic reticulum membrane. The catalysed reaction is an acyl-CoA + a 1,2-diacyl-sn-glycerol = a triacyl-sn-glycerol + CoA. The protein operates within glycerolipid metabolism; triacylglycerol biosynthesis. In terms of biological role, major contributor to triacylglycerol (TAG) synthesis and oil accumulation in developing seeds. Catalyzes the acylation of the sn-3 hydroxy group of sn-1,2-diacylglycerol using acyl-CoA. Has a marked preference for oleoyl-CoA as substrate. This Corylus americana (American hazelnut) protein is Diacylglycerol O-acyltransferase 1.